We begin with the raw amino-acid sequence, 146 residues long: Dual specificity phosphatase Cdc25 (146 aa).

A Rhodanese domain is found at 34 to 135 (RRPNIAIIDV…WEASGKPVCR (102 aa)). 45-48 (DEER) is a binding site for substrate. Residue His-53 participates in Zn(2+) binding. 68–71 (KISH) contributes to the substrate binding site. Cys-86 serves as the catalytic Cysteine persulfide intermediate. 90 to 92 (QVR) contributes to the substrate binding site. Zn(2+) is bound by residues Cys-134, Cys-136, and Cys-141.

The protein belongs to the MPI phosphatase family. As to expression, expressed in roots and at lower levels in shoots (at protein level). Expressed in leaves, stems and flowers.

The protein resides in the nucleus. It carries out the reaction O-phospho-L-tyrosyl-[protein] + H2O = L-tyrosyl-[protein] + phosphate. It catalyses the reaction [glutaredoxin]-dithiol + arsenate + glutathione + H(+) = glutathionyl-S-S-[glutaredoxin] + arsenite + H2O. Its activity is regulated as follows. Inhibited by NSC95397. In terms of biological role, tyrosine protein phosphatase that dephosphorylates CDK complex and activate its kinase activity in vitro. Arsenate reductase that plays a major role in the reduction of arsenate to arsenite and arsenic retention in roots. Has an in vitro and in vivo arsenate reductase activity. Plays no role in arsenic metabolism. The protein is Dual specificity phosphatase Cdc25 of Arabidopsis thaliana (Mouse-ear cress).